The primary structure comprises 222 residues: Small ribosomal subunit protein uS3 (222 aa).

Positions 38 to 106 constitute a KH type-2 domain; that stretch reads IRKFISEKLA…NVHINIVEIK (69 aa).

Belongs to the universal ribosomal protein uS3 family. As to quaternary structure, part of the 30S ribosomal subunit. Forms a tight complex with proteins S10 and S14.

Its function is as follows. Binds the lower part of the 30S subunit head. Binds mRNA in the 70S ribosome, positioning it for translation. This is Small ribosomal subunit protein uS3 from Lactobacillus johnsonii (strain CNCM I-12250 / La1 / NCC 533).